A 320-amino-acid polypeptide reads, in one-letter code: ATP-dependent 6-phosphofructokinase (320 aa).

Glycine 12 serves as a coordination point for ATP. ADP contacts are provided by residues 22–26 (RGVVR) and 55–60 (RYSVSD). Residues 73–74 (RF) and 103–106 (GDGS) contribute to the ATP site. Aspartate 104 provides a ligand contact to Mg(2+). Substrate is bound at residue 126–128 (TID). The active-site Proton acceptor is the aspartate 128. Arginine 155 contributes to the ADP binding site. Substrate-binding positions include arginine 163 and 170–172 (MGR). ADP-binding positions include 186–188 (GCE), lysine 212, and 214–216 (KKH). Substrate is bound by residues glutamate 223, arginine 244, and 250 to 253 (HIQR).

It belongs to the phosphofructokinase type A (PFKA) family. ATP-dependent PFK group I subfamily. Prokaryotic clade 'B1' sub-subfamily. Homotetramer. It depends on Mg(2+) as a cofactor.

It localises to the cytoplasm. It carries out the reaction beta-D-fructose 6-phosphate + ATP = beta-D-fructose 1,6-bisphosphate + ADP + H(+). It participates in carbohydrate degradation; glycolysis; D-glyceraldehyde 3-phosphate and glycerone phosphate from D-glucose: step 3/4. Its activity is regulated as follows. Allosterically activated by ADP and other diphosphonucleosides, and allosterically inhibited by phosphoenolpyruvate. Catalyzes the phosphorylation of D-fructose 6-phosphate to fructose 1,6-bisphosphate by ATP, the first committing step of glycolysis. The sequence is that of ATP-dependent 6-phosphofructokinase from Pectobacterium carotovorum subsp. carotovorum (strain PC1).